The sequence spans 2210 residues: MSPSLVVPVFAGHGTTAINSTSLRERAAADASSPSGALLLDACHYAFNVELSTLSPSEALAVGINPDHFTDPKSLLLLPSHEHYLTNSVVTAATLFLVQTLRYLASVQASSSTSFASSLQTNSEHGLGIVGFSSGILPACVAGSSATTLEFISNAVETFRLAFWIGVRLQIHKASVQTPELLGESPLPWSLAFLGMSHAAAESAIQSFLKSFEGTPELRVTSVVSETSVTISGRPDILAAFAAQLPLSGPVHKTTVDALYHSSSHHDGVRSQVLADVIRRNIRFPTHADIKVPVRSTYSGELLSKGSEGSASFVEQVVDMILTQPVNWDKVTEALVRATPEGTVVHLLNFGPGAGLTKGIERYFPSNKVSSTDLSSEPVHTSTLQMPSSVQEPIAICGMSVNMPGAPSVAKLWEVLEKGINTVSEVPEHRFKVSDYNDPKKKGRTMGAHTGNFIDEPDAFDNKFFNISPREARSMDPQQRVLLHTAYEALEDAGYVPNSTPTNNPETFGCYVGVATNDYVQNLRNDIDVYYSTGTLRAFLSGRISYALQFSGPSIVVDTACSSSLIAVYQACRALMNRDCNAAVAGGVNVISSPDMFLGLDRGHFLSPTGQCKAFDASADGYSRSEGCGIFVLKRLSDAVTENDQILGVIRGVEVNQSGNAYSITRPHAPTQENLFTQALERSGLDASRISVVEAHGTGTQAGDPIELESIRGIFAKHRKANNPLHITSVKANIGHLEAASGAAALAKLLLMLRHRTIPRLVSLKNLNPRIKPLASDNVIIDTKQVAWTVPDESLPRVALLNNFGAAGSNGALLLEEYIPKSSGKDTDVASTFIVGLSAKNEQVLVDLRASYIEYLRSPASAGVTLADIAYTATARRRIFSHRFAVTARSKEELTHKLELASGKTVSDNAPGKVVFVFSGQGGQYLGMGSALYKTSALFKNAIDECEYFLKKNNFPGVLPIITSDGESSGLTPVEEFEANQAAIFALEYGLAKLWMSWGVTPTAVVGHSLGEYAAHVITGVLSLESALTLVAHRVRIMMRTCELDTTGMIAINLGSGAVTDILSSSPDFSGISIACYNSATDCVASGPIGQLDALKAHLDKAVHCKSVRLKVPFGYHSSAMQPLLEEFGALAKRVTVHAPKIPVISNPLGRVIREGDKSTFNAEYYLSHCADPVQFESGISALIDDASFADIAAWIELGPHPTTLPMLTVHRGVSKEALLVGSLKKRQDDGLTLSSSLSQLYTSNVPVRWRDVFADVSAACVSLPSYPWQKSKFWVAWKEDSPAPASSTEGSPASTKAFNPVNDFGMLQSWAQFPSAANSQIAIFETPISLLKTSITGHIVGDVPLCPASVYHELALAGIEASKAHLSLPLQGSHSALFNIDYVKPLVYSKDVARVIKTTIAMNTDGSGSFTVESYADSEAESVHCSGQFRPLLVVDTTTKFNRMAPVVSRRTAAICSGEDGEAEVFTTRTAYEIIFTRVVRYAKEYHTMKNVTISKNGMEGYAVVKLPKDHDKSKFVVHPVFMDTMLHVAGFLANMQGGDNDAYICSKVKSVKAVPSLINNDATYGVFVVNAWVESEGMMLSDAIAVDISGHGQIVAQLKGMCFKKLRLNTLQRSLAMHAGHTAPAPAQKRSVAAAPKPKITEVAPALEPRSSPAKRSVDVQNTVLNIVGDTCGIEISALDVNADLETYGVDSLMSIEILRKFEESFPQMQFDATIFSTCNNITELVREISSTVGSQAATAVNTPETASTPEPTLQGDASQSTDVRSILLELISSFTGFEISNFDLNADADTAYGLDKFLFIPLFSKLQTFFPDITLDPTKPSVCSTIGELLDEVTAQVQAGPSSPSSDLVDTKPMFVSVLGLDESDIQDDTEFETIGLDSLTAIEALHAIQTEYGLELPSNLFELHTTAKAVNQYISSKRPGKSPKQVEETAMDPDREEDLSDLTPEQVQSVVRVLRLDEVPMSVQKSSSSGSPLFLFHDGSGAVNYLRRLGSVDREFWGFNNPNYATGKPWGSVEAMASAYADYAVKVAGSRPVIFGGWSFGGVVGFEAARQLMRRGVPVKGVVLIDSPFPVDHVPSSNEFMAVTAGAFTRGGRTPIGRMMWKQLQQNAPLLKTYDPRIAGGPYPPLVLLHNKEGIPPDAFLPYPVPRWMSEKGTDPCLLADDWSGLVGAPIKVIHLPGTHFTTFATPHLGAVTQALVDGCAYLDGL.

An N-terminal acylcarrier protein transacylase domain (SAT) region spans residues 38 to 261 (LLLDACHYAF…HKTTVDALYH (224 aa)). One can recognise a Ketosynthase family 3 (KS3) domain in the interval 391-817 (QEPIAICGMS…GSNGALLLEE (427 aa)). Catalysis depends on for beta-ketoacyl synthase activity residues Cys-561, His-696, and His-736. Residues 915 to 1240 (VFVFSGQGGQ…GLTLSSSLSQ (326 aa)) form a malonyl-CoA:ACP transacylase (MAT) domain region. Catalysis depends on Ser-1009, which acts as the For acyl/malonyl transferase activity. Residues 1307–1437 (MLQSWAQFPS…GQFRPLLVVD (131 aa)) form an N-terminal hotdog fold region. Residues 1307 to 1614 (MLQSWAQFPS…FKKLRLNTLQ (308 aa)) form the PKS/mFAS DH domain. A product template (PT) domain region spans residues 1336-1611 (ITGHIVGDVP…GMCFKKLRLN (276 aa)). Catalysis depends on His-1339, which acts as the Proton acceptor; for dehydratase activity. Residues 1464-1614 (AEVFTTRTAY…FKKLRLNTLQ (151 aa)) form a C-terminal hotdog fold region. Catalysis depends on Asp-1525, which acts as the Proton donor; for dehydratase activity. The region spanning 1660 to 1735 (VDVQNTVLNI…ELVREISSTV (76 aa)) is the Carrier 1 domain. Residue Ser-1694 is modified to O-(pantetheine 4'-phosphoryl)serine. The tract at residues 1739-1761 (AATAVNTPETASTPEPTLQGDAS) is disordered. The Carrier 2 domain occupies 1845–1922 (SSPSSDLVDT…AVNQYISSKR (78 aa)). Residue Ser-1882 is modified to O-(pantetheine 4'-phosphoryl)serine. Positions 1920–1946 (SKRPGKSPKQVEETAMDPDREEDLSDL) are disordered. Residues 1933-1944 (TAMDPDREEDLS) show a composition bias toward acidic residues. The segment at 1963–2202 (VPMSVQKSSS…LGAVTQALVD (240 aa)) is thioesterase (TE) domain.

It participates in secondary metabolite biosynthesis. Its function is as follows. Non-reducing polyketide synthase, part of the gene cluster that mediates the biosynthesis of melleolides, a range of antifungal and phytotoxic polyketide derivatives composed of an orsellinic acid (OA) moiety esterified to various sesquiterpene alcohols. The first step in melleolides biosynthesis is performed by the delta(6)-protoilludene synthase PRO1 which catalyzes the cyclization of farnesyl diphosphate to protoilludene. The orsellinic acid synthase armB produces OA by condensing acetyl-CoA with 3 malonyl-CoA units in a three-round chain elongation reaction folowed by a C2-C7 ring closure. ArmB further catalyzes the trans-esterification of OA to the various sesquiterpene alcohols resulting from the hydroxylation of protoilludene. The melleolides cluster also includes 5 cytochrome P450 monooxygenases, 4 NAD(+)-dependent oxidoreductases, one flavin-dependent oxidoreductase, and one O-methyltransferase. The cytochrome P450 monooxygenases may be involved in protoilludene hydroxylation to elaborate melleolides with multiple alcohol groups, such as melleolide D, which carries alcohol functionalities at C-4, C-5, C-10, and C-13. The role of the NAD(+)-dependent enzymes remains unknown. Numerous melleolides, including arnamial, show 5'-O-methylation of the aromatic moiety which may be catalyzed by the methyltransferase encoded in the cluster. The flavin-dependent oxidoreductase might represent the dehydrogenase yielding the aldehyde in position 1 of arnamial and other melleolides. Finally, several halogenase localized outside of the cluster (armH1 to armH5), are able to catalyze the transfer of a single chlorine atom to the melleolide backbone, resulting in a 6'-chloromelleolide product. This is Orsellinic acid synthase ArmB from Armillaria ostoyae (Armillaria root rot fungus).